The primary structure comprises 338 residues: Glyceraldehyde-3-phosphate dehydrogenase, cytosolic (338 aa).

Residues 14 to 15, Asp-36, and Arg-83 each bind NAD(+); that span reads RI. D-glyceraldehyde 3-phosphate contacts are provided by residues 154–156, Thr-185, 214–215, and Arg-237; these read SCT and TG. Cys-155 functions as the Nucleophile in the catalytic mechanism. Asn-319 provides a ligand contact to NAD(+).

It belongs to the glyceraldehyde-3-phosphate dehydrogenase family. As to quaternary structure, homotetramer.

The protein localises to the cytoplasm. It catalyses the reaction D-glyceraldehyde 3-phosphate + phosphate + NAD(+) = (2R)-3-phospho-glyceroyl phosphate + NADH + H(+). It functions in the pathway carbohydrate degradation; glycolysis; pyruvate from D-glyceraldehyde 3-phosphate: step 1/5. Key enzyme in glycolysis that catalyzes the first step of the pathway by converting D-glyceraldehyde 3-phosphate (G3P) into 3-phospho-D-glyceroyl phosphate. Essential for the maintenance of cellular ATP levels and carbohydrate metabolism. The sequence is that of Glyceraldehyde-3-phosphate dehydrogenase, cytosolic (GAPC1) from Pisum sativum (Garden pea).